Here is a 567-residue protein sequence, read N- to C-terminus: 25S rRNA (cytosine-C(5))-methyltransferase NSUN5 (567 aa).

Over residues 1-17 the composition is skewed to basic residues; that stretch reads MVARRNKPKAPLVKHRF. The disordered stretch occupies residues 1-88; the sequence is MVARRNKPKA…KTPPATKQKF (88 aa). Residues 312–318, Glu336, Asp363, and Asp383 contribute to the S-adenosyl-L-methionine site; that span reads CSAPGNK. The active-site Nucleophile is Cys444.

This sequence belongs to the class I-like SAM-binding methyltransferase superfamily. RsmB/NOP family.

It catalyses the reaction a cytidine in 25S rRNA + S-adenosyl-L-methionine = a 5-methylcytidine in 25S rRNA + S-adenosyl-L-homocysteine + H(+). Functionally, S-adenosyl-L-methionine-dependent methyltransferase that specifically methylates the C(5) position of cytosine 2268 (m5C2268) in 25S rRNA. The sequence is that of 25S rRNA (cytosine-C(5))-methyltransferase NSUN5 from Arabidopsis thaliana (Mouse-ear cress).